We begin with the raw amino-acid sequence, 192 residues long: Pyridoxal 5'-phosphate synthase subunit PdxT (192 aa).

53 to 55 (GES) is an L-glutamine binding site. Catalysis depends on Cys82, which acts as the Nucleophile. L-glutamine contacts are provided by residues Arg109 and 137–138 (IR). Residues His173 and Glu175 each act as charge relay system in the active site.

Belongs to the glutaminase PdxT/SNO family. In terms of assembly, in the presence of PdxS, forms a dodecamer of heterodimers. Only shows activity in the heterodimer.

The catalysed reaction is aldehydo-D-ribose 5-phosphate + D-glyceraldehyde 3-phosphate + L-glutamine = pyridoxal 5'-phosphate + L-glutamate + phosphate + 3 H2O + H(+). It catalyses the reaction L-glutamine + H2O = L-glutamate + NH4(+). It functions in the pathway cofactor biosynthesis; pyridoxal 5'-phosphate biosynthesis. Functionally, catalyzes the hydrolysis of glutamine to glutamate and ammonia as part of the biosynthesis of pyridoxal 5'-phosphate. The resulting ammonia molecule is channeled to the active site of PdxS. This Methanoculleus marisnigri (strain ATCC 35101 / DSM 1498 / JR1) protein is Pyridoxal 5'-phosphate synthase subunit PdxT.